Consider the following 561-residue polypeptide: Inner membrane ABC transporter ATP-binding protein YddA (561 aa).

Topologically, residues 1–3 are cytoplasmic; it reads MIT. Residues 4-24 form a helical membrane-spanning segment; that stretch reads IPITLRMLIAKYLCLLKPFWL. Topologically, residues 25-31 are periplasmic; the sequence is RKNNKTS. Residues 32–52 form a helical membrane-spanning segment; sequence VLLIIIILAMILGVVKIQVWL. The region spanning 35–337 is the ABC transmembrane type-1 domain; sequence IIIILAMILG…FIYKYDELAE (303 aa). Topologically, residues 53–70 are cytoplasmic; it reads NDWNNDFFNALSQKETDK. The helical transmembrane segment at 71–91 threads the bilayer; that stretch reads LWQLVLWFPALLGIFVLISVN. Residues 92-151 are Periplasmic-facing; that stretch reads KTWLIKLLTIRWREWLTDYYLNRWFADKNYYFTQIYGEHKNTDNPDQRIAEDILLLISKT. A helical membrane pass occupies residues 152-172; that stretch reads LSLSFGFIQSLSMLITFTVIL. The Cytoplasmic portion of the chain corresponds to 173–187; it reads WESAGTLSFTVGGTE. Residues 188 to 208 form a helical membrane-spanning segment; that stretch reads WNIQGYMVYTVVLIVIGGTLF. At 209–290 the chain is on the periplasmic side; it reads THKVGKRIRP…WQNIYSRSLS (82 aa). A helical transmembrane segment spans residues 291-311; the sequence is VLPYFLLLPQFISGQINLGGL. The Cytoplasmic segment spans residues 312–561; that stretch reads MKSRQAFMLV…DDICDISAVL (250 aa). Residues 367–561 enclose the ABC transporter domain; sequence VQVADASIRT…DDICDISAVL (195 aa). Residue 400-407 participates in ATP binding; it reads GYSGAGKT.

Belongs to the ABC transporter superfamily.

Its subcellular location is the cell inner membrane. In Escherichia coli (strain K12), this protein is Inner membrane ABC transporter ATP-binding protein YddA (yddA).